We begin with the raw amino-acid sequence, 504 residues long: Arabinose import ATP-binding protein AraG (504 aa).

2 ABC transporter domains span residues 8-243 (LSFR…MVGR) and 256-499 (YGEE…MPKV). 40-47 (GENGAGKS) provides a ligand contact to ATP.

Belongs to the ABC transporter superfamily. Arabinose importer (TC 3.A.1.2.2) family. In terms of assembly, the complex is composed of two ATP-binding proteins (AraG), two transmembrane proteins (AraH) and a solute-binding protein (AraF).

The protein resides in the cell inner membrane. The catalysed reaction is L-arabinose(out) + ATP + H2O = L-arabinose(in) + ADP + phosphate + H(+). Part of the ABC transporter complex AraFGH involved in arabinose import. Responsible for energy coupling to the transport system. The protein is Arabinose import ATP-binding protein AraG of Escherichia coli (strain UTI89 / UPEC).